The chain runs to 319 residues: Acetyl-coenzyme A carboxylase carboxyl transferase subunit alpha (319 aa).

Residues 35-296 form the CoA carboxyltransferase C-terminal domain; sequence NLDEEVQRLR…KAQLLADLLD (262 aa).

This sequence belongs to the AccA family. Acetyl-CoA carboxylase is a heterohexamer composed of biotin carboxyl carrier protein (AccB), biotin carboxylase (AccC) and two subunits each of ACCase subunit alpha (AccA) and ACCase subunit beta (AccD).

It localises to the cytoplasm. It carries out the reaction N(6)-carboxybiotinyl-L-lysyl-[protein] + acetyl-CoA = N(6)-biotinyl-L-lysyl-[protein] + malonyl-CoA. It participates in lipid metabolism; malonyl-CoA biosynthesis; malonyl-CoA from acetyl-CoA: step 1/1. Component of the acetyl coenzyme A carboxylase (ACC) complex. First, biotin carboxylase catalyzes the carboxylation of biotin on its carrier protein (BCCP) and then the CO(2) group is transferred by the carboxyltransferase to acetyl-CoA to form malonyl-CoA. The sequence is that of Acetyl-coenzyme A carboxylase carboxyl transferase subunit alpha from Pectobacterium atrosepticum (strain SCRI 1043 / ATCC BAA-672) (Erwinia carotovora subsp. atroseptica).